A 188-amino-acid chain; its full sequence is EP300-interacting inhibitor of differentiation 1 (188 aa).

Positions 1–122 (MSEMAELSEL…PEEEQLSGAG (122 aa)) are disordered. Composition is skewed to acidic residues over residues 53-64 (LEEEGPMEEEEA) and 94-117 (FESE…EEEQ). The segment at 55 to 121 (EEGPMEEEEA…YPEEEQLSGA (67 aa)) is interaction with NR0B2. An LXCXE motif motif is present at residues 179–183 (LGCDE).

As to quaternary structure, interacts via its LXCXE motif with the entire pocket region of RB1. Interacts with EP300, NR0B2 and TRIM27.

The protein resides in the nucleus. It localises to the cytoplasm. Its function is as follows. Interacts with RB1 and EP300 and acts as a repressor of MYOD1 transactivation. Inhibits EP300 and CBP histone acetyltransferase activity. May be involved in coupling cell cycle exit to the transcriptional activation of genes required for cellular differentiation. May act as a candidate coinhibitory factor for NR0B2 that can be directly linked to transcription inhibitory mechanisms. The chain is EP300-interacting inhibitor of differentiation 1 from Pongo abelii (Sumatran orangutan).